The following is a 209-amino-acid chain: uncharacterized protein (209 aa).

This is an uncharacterized protein from Arabidopsis thaliana (Mouse-ear cress).